The primary structure comprises 223 residues: Ribonuclease T (223 aa).

One can recognise an Exonuclease domain in the interval 20-194 (VVIDVETAGF…YDTEQTALLF (175 aa)). Mg(2+) contacts are provided by D23, E25, H181, and D186. H181 acts as the Proton donor/acceptor in catalysis.

It belongs to the RNase T family. In terms of assembly, homodimer. It depends on Mg(2+) as a cofactor.

In terms of biological role, trims short 3' overhangs of a variety of RNA species, leaving a one or two nucleotide 3' overhang. Responsible for the end-turnover of tRNA: specifically removes the terminal AMP residue from uncharged tRNA (tRNA-C-C-A). Also appears to be involved in tRNA biosynthesis. This Cronobacter sakazakii (strain ATCC BAA-894) (Enterobacter sakazakii) protein is Ribonuclease T.